Consider the following 394-residue polypeptide: Serine palmitoyltransferase (394 aa).

Residues 111 to 112 (GF), Ser183, His211, and Thr239 contribute to the pyridoxal 5'-phosphate site. N6-(pyridoxal phosphate)lysine is present on Lys242.

Belongs to the class-II pyridoxal-phosphate-dependent aminotransferase family. Pyridoxal 5'-phosphate is required as a cofactor.

It carries out the reaction L-serine + hexadecanoyl-CoA + H(+) = 3-oxosphinganine + CO2 + CoA. It participates in lipid metabolism; sphingolipid metabolism. In terms of biological role, involved in de novo bacterial ceramide synthesis. Catalyzes the condensation of L-serine with palmitoyl-CoA (hexadecanoyl-CoA) to produce 3-oxosphinganine. Also capable of using alanine as substrate leading to the formation of 1-deoxysphinganine (1-deoxySa). Contributes to the levels of endogenous sphingolipids in its host. This Bacteroides thetaiotaomicron (strain ATCC 29148 / DSM 2079 / JCM 5827 / CCUG 10774 / NCTC 10582 / VPI-5482 / E50) protein is Serine palmitoyltransferase.